The sequence spans 473 residues: Siroheme synthase (473 aa).

Residues Met-1–Leu-203 are precorrin-2 dehydrogenase /sirohydrochlorin ferrochelatase. Residues Asp-22–Val-23 and Pro-43–Lys-44 contribute to the NAD(+) site. Residue Ser-128 is modified to Phosphoserine. Positions Gly-215 to Ala-473 are uroporphyrinogen-III C-methyltransferase. Pro-224 is a binding site for S-adenosyl-L-methionine. Asp-247 functions as the Proton acceptor in the catalytic mechanism. The active-site Proton donor is the Lys-269. S-adenosyl-L-methionine is bound by residues Gly-300 to Asp-302, Ile-305, Thr-330 to Ala-331, Met-382, and Gly-411.

The protein in the N-terminal section; belongs to the precorrin-2 dehydrogenase / sirohydrochlorin ferrochelatase family. It in the C-terminal section; belongs to the precorrin methyltransferase family.

The enzyme catalyses uroporphyrinogen III + 2 S-adenosyl-L-methionine = precorrin-2 + 2 S-adenosyl-L-homocysteine + H(+). It catalyses the reaction precorrin-2 + NAD(+) = sirohydrochlorin + NADH + 2 H(+). The catalysed reaction is siroheme + 2 H(+) = sirohydrochlorin + Fe(2+). The protein operates within cofactor biosynthesis; adenosylcobalamin biosynthesis; precorrin-2 from uroporphyrinogen III: step 1/1. It participates in cofactor biosynthesis; adenosylcobalamin biosynthesis; sirohydrochlorin from precorrin-2: step 1/1. Its pathway is porphyrin-containing compound metabolism; siroheme biosynthesis; precorrin-2 from uroporphyrinogen III: step 1/1. It functions in the pathway porphyrin-containing compound metabolism; siroheme biosynthesis; siroheme from sirohydrochlorin: step 1/1. The protein operates within porphyrin-containing compound metabolism; siroheme biosynthesis; sirohydrochlorin from precorrin-2: step 1/1. Functionally, multifunctional enzyme that catalyzes the SAM-dependent methylations of uroporphyrinogen III at position C-2 and C-7 to form precorrin-2 via precorrin-1. Then it catalyzes the NAD-dependent ring dehydrogenation of precorrin-2 to yield sirohydrochlorin. Finally, it catalyzes the ferrochelation of sirohydrochlorin to yield siroheme. The polypeptide is Siroheme synthase (Pseudoalteromonas translucida (strain TAC 125)).